A 252-amino-acid chain; its full sequence is Probable transcriptional regulatory protein A1E_02520 (252 aa).

This sequence belongs to the TACO1 family.

It is found in the cytoplasm. The polypeptide is Probable transcriptional regulatory protein A1E_02520 (Rickettsia canadensis (strain McKiel)).